The chain runs to 492 residues: uncharacterized protein (492 aa).

Helical transmembrane passes span 13–33 (LGFILASVGSAIGLGNIWRFG), 42–62 (GAFLIPYIVALLCVGIPLMIL), 97–117 (FIITSYYVVIIAWCLYYLIIL), 150–170 (GILVSTLAVWGIVALILSAGI), 180–200 (IMIPFLLFLIILLVLNALTLP), 222–242 (VWLSAFSQIFFSLSLGFGILI), 258–278 (AVTVSLLNCGFSFLAGFAVFG), 320–340 (FGIVFFLALVFAGISSAVSIV), 359–379 (LLAVLALFIIISPIFTTGAGL), 391–411 (GYLLPIAAILEIIIAIWLFGG), 428–448 (VWWKYLAGVVSPIILTAVVFL), and 463–483 (TTYVIFGALIIPLAFVVSVIL).

It belongs to the sodium:neurotransmitter symporter (SNF) (TC 2.A.22) family.

It localises to the cell membrane. Putative sodium-dependent transporter. This is an uncharacterized protein from Methanocaldococcus jannaschii (strain ATCC 43067 / DSM 2661 / JAL-1 / JCM 10045 / NBRC 100440) (Methanococcus jannaschii).